Here is a 361-residue protein sequence, read N- to C-terminus: MNGSRAWRLAAWLLLCLSCSAAVARKDSCETCTKLVERFHKGLENTAKKNFGGGNTAWEEKTLSKYESSEIRLVEIIENICDSSDFECNHMVEEHEEQIEKWWFKMKQKYPDLLKWFCIEAIKVCCPSGSYGPDCLACLGGSERPCHGNGFCSGDGTRSGDGSCRCKAEYTGSFCLECSDGYYSSERNDTHAVCIACNQACKTCNGPSNEDCKECNNGWVKDDGKCVDLNECASEESPCKDSQYCLNTEGSFLCKECDGSCSGCSGEGPESCKDCATGFVMLSGKCTDVDECDASEKLCLRENEVCLNTAGSYKCTCSEGFEDKEGNCVKIMETENPEITEGETGTPASDTNILNTAHEDL.

Positions 1–24 (MNGSRAWRLAAWLLLCLSCSAAVA) are cleaved as a signal peptide. The EGF-like 1 domain occupies 134–176 (DCLACLGGSERPCHGNGFCSGDGTRSGDGSCRCKAEYTGSFCL). 3 cysteine pairs are disulfide-bonded: cysteine 138/cysteine 152, cysteine 146/cysteine 164, and cysteine 166/cysteine 175. An N-linked (GlcNAc...) asparagine glycan is attached at asparagine 188. 2 FU repeats span residues 191-238 (HAVC…EESP) and 251-298 (SFLC…SEKL). The EGF-like 2; calcium-binding domain occupies 288–329 (DVDECDASEKLCLRENEVCLNTAGSYKCTCSEGFEDKEGNCV). 3 disulfides stabilise this stretch: cysteine 292–cysteine 306, cysteine 299–cysteine 315, and cysteine 317–cysteine 328. Residues 339–361 (ITEGETGTPASDTNILNTAHEDL) are disordered. The span at 346-355 (TPASDTNILN) shows a compositional bias: polar residues.

It belongs to the CRELD family.

The protein resides in the secreted. Its subcellular location is the endoplasmic reticulum. Its function is as follows. Possible role in neuronal acetylcholine receptor transport. This Xenopus laevis (African clawed frog) protein is Cysteine-rich with EGF-like domain protein 2-B (creld2-b).